The sequence spans 1096 residues: Centrosome-associated zinc finger protein Cp190 (1096 aa).

The involved in microtubule and centrosome binding stretch occupies residues 1–209 (MGEVKSVKVD…GDSSNVKQEP (209 aa)). Residues 30 to 97 (CDLTLQFRDN…MYTGTLEFEL (68 aa)) enclose the BTB domain. The interval 126–308 (MENVNRQQRP…PQGTQTQLEH (183 aa)) is disordered. Composition is skewed to polar residues over residues 175-213 (RANT…TSPF) and 220-230 (YNNNKRPAQTS). Phosphoserine is present on residues serine 197 and serine 211. The segment at 207-271 (QEPTSPFEQL…GDNDPEYDGG (65 aa)) is nuclear localization. Positions 210-245 (TSPFEQLRKGYNNNKRPAQTSLLSPPSKKPSLEEVK) are involved in interaction with cliff. Residue threonine 229 is modified to Phosphothreonine. Phosphoserine is present on serine 233. Residues 239-252 (PSLEEVKEFAEQQR) are compositionally biased toward basic and acidic residues. Residues 245 to 468 (KEFAEQQRMR…IAQGAENTTG (224 aa)) are centrosomal targeting M domain involved in interaction with ZIPIC. Residues 292 to 305 (STSKQQSPQGTQTQ) show a composition bias toward low complexity. Residues serine 298 and serine 319 each carry the phosphoserine modification. The segment at 309-390 (GSTTIILKQD…KPPANQSSAT (82 aa)) is involved in interaction with cliff. The interval 366–449 (NTPAAPTEKS…ANTAAAQKRR (84 aa)) is disordered. Residues 385–508 (NQSSATTSPH…KETIDPALCE (124 aa)) form a centrosomal localization and interaction with microtubules region. Positions 412–445 (AQQKAASSQQKSGTSQTTGNQGTGANPPANTAAA) are enriched in low complexity. C2H2-type zinc fingers lie at residues 538–561 (AECA…NEVH) and 567–590 (QQCI…KSYH). The residue at position 603 (threonine 603) is a Phosphothreonine. Positions 608-625 (LGSQDEEEEAEGDEEQEP) are enriched in acidic residues. Residues 608–630 (LGSQDEEEEAEGDEEQEPEQTGK) form a disordered region. A phosphoserine mark is found at serine 610, serine 708, and serine 723. The interval 710-733 (PEAEHVKQETDEKSLAGTEEEYDD) is disordered. Over residues 711–723 (EAEHVKQETDEKS) the composition is skewed to basic and acidic residues. Threonine 727 is modified (phosphothreonine). Phosphoserine occurs at positions 745, 748, 757, and 760. The interval 770–927 (LIAESEEQSN…EDSPIPHSDS (158 aa)) is disordered. The span at 777–799 (QSNKEPKSDKPRDDISEKLKELT) shows a compositional bias: basic and acidic residues. The segment covering 802–812 (WTEDENDDDVD) has biased composition (acidic residues). Position 817 is a phosphothreonine (threonine 817). Basic and acidic residues-rich tracts occupy residues 825–834 (ANKDPEPTVH), 849–861 (KGPE…KASE), 882–907 (EKMD…KEAE), and 914–927 (EFIK…HSDS). 3 positions are modified to phosphoserine: serine 920, serine 925, and serine 927. A Phosphothreonine modification is found at threonine 936. A Phosphoserine modification is found at serine 938. 2 stretches are compositionally biased toward basic and acidic residues: residues 960-973 (IAEA…KDIV) and 1011-1035 (AAEK…EDKP). The segment at 960–1096 (IAEAEKPDQE…GVSAAAKEEL (137 aa)) is disordered. Phosphoserine occurs at positions 1071 and 1074. Acidic residues predominate over residues 1076–1086 (WGDDDEDEDEN).

Homodimerizes via the N-terminal BTB domain. Component of the gypsy chromatin insulator complex, composed of Cp190, mod(mdg4) and su(Hw). The gypsy chromatin insulator complex interacts with Topors via mod(mdg4) and su(Hw). Interacts with Cp60. Interacts with inv. Interacts with Nup98. Interacts (via BTB domain) with pita (via region between the ZAD domain and the first zinc finger domain); the interaction is direct. Interacts with ZIPIC (via region between the ZAD domain and the first zinc finger domain); the interaction is direct. Interacts (via regions between the BTB domain and first zinc finger domain) with cliff (via regions flanking MADF domain 1); the interaction is probably direct. Associates (via N-terminus) with microtubules; the interaction is direct, is enhanced by dimerization and involves multiple regions within the N-terminus. Microtubule association is enriched at growing plus ends. Expressed in spermatids but not in mature spermatozoa. Localizes within the spermatids to a sheath of microtubules around the nucleus and to microtubules within the tail.

The protein resides in the nucleus. The protein localises to the cytoplasm. It is found in the cytoskeleton. It localises to the microtubule organizing center. Its subcellular location is the centrosome. The protein resides in the chromosome. The protein localises to the nucleoplasm. Functionally, plays a central role in chromatin domain organization and boundary function through recruitment by a range of insulator DNA-binding proteins, including ZIPIC, pita, CTCF, su(Hw), cliff and others. Together with pita and CTCF cooperatively binds to and regulates the activity of the Miscadastral pigmentation (MCP) insulator. Cooperatively recruited to the front-ultraabdominal (Fub) boundary by pita, su(Hw) and cliff. Recruitment of Cp190 together with Chro/chromator induces chromatin decondensation. Component of the gypsy chromatin insulator complex which is required for the function of the gypsy chromatin insulator and other endogenous chromatin insulators. Chromatin insulators are regulatory elements that establish independent domains of transcriptional activity within eukaryotic genomes. Insulators have two defining properties; they can block the communication between an enhancer and a promoter when placed between them and can also buffer transgenes from position effect variegation (PEV). Insulators are proposed to structure the chromatin fiber into independent domains of differing transcriptional potential by promoting the formation of distinct chromatin loops to form topologically associating domains (TADs). This chromatin looping may involve the formation of insulator bodies, where homotypic interactions between individual subunits of the insulator complex could promote the clustering of widely spaced insulators at the nuclear periphery. Within the gypsy insulator complex, this protein may directly bind to insulator DNA at sites distinct from those recognized by su(Hw). Required during embryogenesis for axial expansion, an actin/myosin dependent process that distributes the dividing nuclei along the anterior-posterior axis of the syncytial embryo. Associates with centrosomes and interphase microtubules during mitosis, and recruits CP60; may have a role in maintaining centrosome and spindle integrity. This Drosophila melanogaster (Fruit fly) protein is Centrosome-associated zinc finger protein Cp190.